Consider the following 391-residue polypeptide: Phosphoprotein (391 aa).

T10 and T16 each carry phosphothreonine. Polar residues predominate over residues Q54–Q65. Disordered regions lie at residues Q54–F98 and T145–S186. A Phosphoserine modification is found at S69. A phosphothreonine mark is found at T91, T150, and T165. S188 bears the Phosphoserine mark. Residues A218–Q245 are a coiled coil. T250 carries the phosphothreonine modification. A Phosphoserine modification is found at S257. Residues T258 and T282 each carry the phosphothreonine modification. Phosphoserine occurs at positions 292 and 294. T298 is modified (phosphothreonine). Phosphoserine occurs at positions 301 and 374. The segment at A343–I391 is interaction with the nucleoprotein. T375 bears the Phosphothreonine mark.

It belongs to the rubulavirus/avulavirus P protein family. In terms of assembly, homotetramer. Interacts (via multimerization domain) with polymerase L; this interaction forms the polymerase L-P complex. Interacts (via N-terminus) with N0 (via Ncore); this interaction allows P to chaperon N0 to avoid N polymerization before encapsidation. Interacts (via C-terminus) with N-RNA template; this interaction positions the polymerase on the template for both transcription and replication. Interacts with host RPS6KB1 kinase; this interaction may play a role in the viral replication and transcription.

It is found in the virion. Its function is as follows. Essential cofactor of the RNA polymerase L that plays a central role in the transcription and replication by forming the polymerase complex with RNA polymerase L and recruiting L to the genomic N-RNA template for RNA synthesis. Also plays a central role in the encapsidation of nascent RNA chains by forming the encapsidation complex with the nucleocapsid protein N (N-P complex). Acts as a chaperone for newly synthesized free N protein, so-called N0, allowing encapsidation of nascent RNA chains during replication. The nucleoprotein protein N prevents excessive phosphorylation of P, which leads to down-regulation of viral transcription/ replication. Participates, together with N, in the formation of viral factories (viroplasms), which are large inclusions in the host cytoplasm where replication takes place. The sequence is that of Phosphoprotein from Mumps virus genotype N (strain L-Zagreb vaccine) (MuV).